Reading from the N-terminus, the 302-residue chain is MHAGLEHIRDWFKGELLFHEPLARHVSLKVGGPVDLLATPDSREELQQLVTLLDQQQIPRFVLGGGFNLLPSDVGYRGCAISLKQINRLQLDDTVVAIEAGASNQSLARAVAELGLSGIEFLIGIPGSVGGAVRMNAGAHGSDIFSVVKTVTLLDQGQFRELPREQLTYGYRCFEIPDNSVIVAVTLQLSEDSLQAVRSRMEEQLGLRWATQNVKFPNAGSFFKNPPGESAWRLIDQAGLRGFSIGNAQVSEVHTNFLINRGNATAADFRALAAAVKERVKATCGIELEEEVQLLDSGECGQ.

An FAD-binding PCMH-type domain is found at lysine 29–aspartate 192. The active site involves arginine 172. Serine 221 functions as the Proton donor in the catalytic mechanism. Residue glutamate 291 is part of the active site.

The protein belongs to the MurB family. The cofactor is FAD.

The protein resides in the cytoplasm. The catalysed reaction is UDP-N-acetyl-alpha-D-muramate + NADP(+) = UDP-N-acetyl-3-O-(1-carboxyvinyl)-alpha-D-glucosamine + NADPH + H(+). It participates in cell wall biogenesis; peptidoglycan biosynthesis. Cell wall formation. This is UDP-N-acetylenolpyruvoylglucosamine reductase from Trichlorobacter lovleyi (strain ATCC BAA-1151 / DSM 17278 / SZ) (Geobacter lovleyi).